The following is a 269-amino-acid chain: Interleukin-1 beta (269 aa).

Residues 1–117 (MATVPELNCE…DDDDNLLVCD (117 aa)) constitute a propeptide that is removed on maturation.

It belongs to the IL-1 family. In terms of assembly, monomer. Interacts with MEFV. Interacts with integrins ITGAV:ITGBV and ITGA5:ITGB1; integrin-binding is required for IL1B signaling. Interacts with cargo receptor TMED10; the interaction is direct and is required for the secretion of IL1B mature form. Interacts with HSP90AB1; the interaction facilitates cargo translocation into the ERGIC. Interacts with HSP90B1; the interaction facilitates cargo translocation into the ERGIC. Expressed in activated macrophages (at protein level).

The protein resides in the cytoplasm. It is found in the cytosol. Its subcellular location is the secreted. The protein localises to the lysosome. It localises to the extracellular exosome. Its function is as follows. Potent pro-inflammatory cytokine. Initially discovered as the major endogenous pyrogen, induces prostaglandin synthesis, neutrophil influx and activation, T-cell activation and cytokine production, B-cell activation and antibody production, and fibroblast proliferation and collagen production. Promotes Th17 differentiation of T-cells. Synergizes with IL12/interleukin-12 to induce IFNG synthesis from T-helper 1 (Th1) cells. Plays a role in angiogenesis by inducing VEGF production synergistically with TNF and IL6. Involved in transduction of inflammation downstream of pyroptosis: its mature form is specifically released in the extracellular milieu by passing through the gasdermin-D (GSDMD) pore. The chain is Interleukin-1 beta (Il1b) from Mus musculus (Mouse).